The following is a 670-amino-acid chain: Zinc finger protein 233 (670 aa).

Residues 8–79 (VTFKDVAVVF…ETEIQGDGCS (72 aa)) form the KRAB domain. Residues 258–280 (QTSDENGKGLSVGSNLELHQQLH) form a C2H2-type 1; degenerate zinc finger. The segment at 311–336 (EKCYRNGDSGEGFSQGSHLQPHQRVS) adopts a C2H2-type 2; degenerate zinc-finger fold. The C2H2-type 3; degenerate zinc finger occupies 342 to 364 (YRCQVYARSSNQNSCLPSHELTH). The C2H2-type 4; degenerate zinc-finger motif lies at 370–392 (CTCGRCGKGFHHSLDFDIHCVDS). The C2H2-type 5; degenerate zinc finger occupies 398–420 (CKCDVYDKGFSQTSQLQAHQRGH). C2H2-type zinc fingers lie at residues 452 to 474 (YKCE…QRIH), 480 to 502 (YKCD…QRVH), 508 to 530 (YKCD…QRVH), 536 to 558 (YKCE…QQVH), 564 to 586 (YKCD…QRVH), 592 to 614 (YKCE…QRIH), and 620 to 642 (YKCG…QRVH).

Belongs to the krueppel C2H2-type zinc-finger protein family.

It localises to the nucleus. Its function is as follows. May be involved in transcriptional regulation. In Homo sapiens (Human), this protein is Zinc finger protein 233 (ZNF233).